A 78-amino-acid chain; its full sequence is Large ribosomal subunit protein bL31 (78 aa).

The Zn(2+) site is built by Cys-16, Cys-18, Cys-38, and Cys-41.

The protein belongs to the bacterial ribosomal protein bL31 family. Type A subfamily. As to quaternary structure, part of the 50S ribosomal subunit. Zn(2+) is required as a cofactor.

Functionally, binds the 23S rRNA. The sequence is that of Large ribosomal subunit protein bL31 from Parafrankia sp. (strain EAN1pec).